Consider the following 29-residue polypeptide: Cyclotide cter-L (29 aa).

The cyclopeptide (His-Asp) cross-link spans 1 to 29; that stretch reads HEPCGESCVFIPCITTVVGCSCKNKVCYD. 3 cysteine pairs are disulfide-bonded: Cys-4–Cys-20, Cys-8–Cys-22, and Cys-13–Cys-27.

Contains 3 disulfide bonds. In terms of processing, this is a cyclic peptide.

Its function is as follows. Probably participates in a plant defense mechanism. The protein is Cyclotide cter-L of Clitoria ternatea (Butterfly pea).